Here is a 328-residue protein sequence, read N- to C-terminus: MDSKVFDVTIIGAGPTGLFTAFYGGMREASVKIIESLPHIGGQLTALYPEKYIYDIAGFPKVHAQELIDRLEEQAKFFDPEIVLGQAIDKVERLEDETIRLTSNTGEVHLTKTIIITAGNGAFQPRRLNIGNSEAFEGKNLHYYVRDMNQYKGKRVVLLGGGDSAVDWALMLEKIAAKVTLVHRRDQFRAHEHSVNQLKESSVEILTPYAPINVEASDKIEKIQLQEVKGEKIIDVEVDDIICNYGFISSLGPIKDWGLEIEKNSIVVNSKMETNIPGVYAAGDVCTYDGKVKLIATGFGEGPTAINNAKNYIDPKARIQPKHSTAMF.

8 residues coordinate FAD: Thr16, Glu35, Gln43, Tyr48, Ile88, Phe123, Asp284, and Thr325.

This sequence belongs to the ferredoxin--NADP reductase type 2 family. As to quaternary structure, homodimer. The cofactor is FAD.

It carries out the reaction 2 reduced [2Fe-2S]-[ferredoxin] + NADP(+) + H(+) = 2 oxidized [2Fe-2S]-[ferredoxin] + NADPH. This chain is Ferredoxin--NADP reductase 2, found in Oceanobacillus iheyensis (strain DSM 14371 / CIP 107618 / JCM 11309 / KCTC 3954 / HTE831).